Here is a 64-residue protein sequence, read N- to C-terminus: Large ribosomal subunit protein uL30 (64 aa).

It belongs to the universal ribosomal protein uL30 family. Part of the 50S ribosomal subunit.

The sequence is that of Large ribosomal subunit protein uL30 from Methylorubrum extorquens (strain CM4 / NCIMB 13688) (Methylobacterium extorquens).